Consider the following 267-residue polypeptide: Type III pantothenate kinase (267 aa).

ATP is bound at residue 6 to 13 (DSGNSRLK). Substrate contacts are provided by residues Tyr96 and 103–106 (GADR). Residue Asp105 is the Proton acceptor of the active site. An ATP-binding site is contributed by Thr131. A substrate-binding site is contributed by Thr181.

Belongs to the type III pantothenate kinase family. Homodimer. NH4(+) is required as a cofactor. Requires K(+) as cofactor.

The protein resides in the cytoplasm. The enzyme catalyses (R)-pantothenate + ATP = (R)-4'-phosphopantothenate + ADP + H(+). It functions in the pathway cofactor biosynthesis; coenzyme A biosynthesis; CoA from (R)-pantothenate: step 1/5. In terms of biological role, catalyzes the phosphorylation of pantothenate (Pan), the first step in CoA biosynthesis. Its function is as follows. Activates transcription of the pertussis toxin operon in a BvgAS-dependent manner. May interact with the alpha subunit of RNA polymerase. This is Type III pantothenate kinase (coaX) from Bordetella pertussis (strain Tohama I / ATCC BAA-589 / NCTC 13251).